A 296-amino-acid chain; its full sequence is tRNA dimethylallyltransferase (296 aa).

9 to 16 is an ATP binding site; the sequence is GTTASGKS. A substrate-binding site is contributed by 11 to 16; it reads TASGKS. Positions 34–37 are interaction with substrate tRNA; it reads DSLA.

It belongs to the IPP transferase family. Monomer. The cofactor is Mg(2+).

It catalyses the reaction adenosine(37) in tRNA + dimethylallyl diphosphate = N(6)-dimethylallyladenosine(37) in tRNA + diphosphate. Functionally, catalyzes the transfer of a dimethylallyl group onto the adenine at position 37 in tRNAs that read codons beginning with uridine, leading to the formation of N6-(dimethylallyl)adenosine (i(6)A). This Campylobacter curvus (strain 525.92) protein is tRNA dimethylallyltransferase.